We begin with the raw amino-acid sequence, 169 residues long: Putative adenylate kinase (169 aa).

ATP-binding residues include Gly-10, Gly-12, Lys-13, Thr-14, and Thr-15. The segment at 28–51 is NMP; that stretch reads HLNDLVGTEGLYDGVDADRGSKIV. Residues 98 to 108 form an LID region; that stretch reads DRGDSPEKAAE. Arg-99 lines the ATP pocket.

The protein belongs to the adenylate kinase family. AK6 subfamily. Interacts with uS11. Not a structural component of 40S pre-ribosomes, but transiently interacts with them by binding to uS11.

It catalyses the reaction AMP + ATP = 2 ADP. It carries out the reaction ATP + H2O = ADP + phosphate + H(+). Its function is as follows. Broad-specificity nucleoside monophosphate (NMP) kinase that catalyzes the reversible transfer of the terminal phosphate group between nucleoside triphosphates and monophosphates. Also has ATPase activity. Involved in the late maturation steps of the 30S ribosomal particles, specifically 16S rRNA maturation. While NMP activity is not required for ribosome maturation, ATPase activity is. Associates transiently with small ribosomal subunit protein uS11. ATP hydrolysis breaks the interaction with uS11. May temporarily remove uS11 from the ribosome to enable a conformational change of the ribosomal RNA that is needed for the final maturation step of the small ribosomal subunit. This Halobacterium salinarum (strain ATCC 29341 / DSM 671 / R1) protein is Putative adenylate kinase.